A 394-amino-acid chain; its full sequence is Phosphoglycerate kinase (394 aa).

Substrate is bound by residues 21-23 (DLN), 59-62 (HLGR), R117, and R150. Residues K201, E318, and 344–347 (GGDT) contribute to the ATP site.

This sequence belongs to the phosphoglycerate kinase family. Monomer.

It localises to the cytoplasm. The catalysed reaction is (2R)-3-phosphoglycerate + ATP = (2R)-3-phospho-glyceroyl phosphate + ADP. It functions in the pathway carbohydrate degradation; glycolysis; pyruvate from D-glyceraldehyde 3-phosphate: step 2/5. The sequence is that of Phosphoglycerate kinase from Blochmanniella pennsylvanica (strain BPEN).